A 310-amino-acid chain; its full sequence is Fe-S cluster assembly protein dre2 (310 aa).

The tract at residues 1–130 (MSGRTLLLSP…KPDIEDMRAV (130 aa)) is N-terminal SAM-like domain. The segment at 131–203 (PLRLGRKKHD…EDLLDGSELA (73 aa)) is linker. The [2Fe-2S] cluster site is built by Cys-212, Cys-223, Cys-226, and Cys-228. Positions 212–228 (CRPKAGRRRRACKDCTC) are fe-S binding site A. Residues Cys-273, Cys-276, Cys-284, and Cys-287 each contribute to the [4Fe-4S] cluster site. 2 consecutive short sequence motifs (cx2C motif) follow at residues 273-276 (CGNC) and 284-287 (CEGC). The tract at residues 273–287 (CGNCSLGDAFRCEGC) is fe-S binding site B.

It belongs to the anamorsin family. As to quaternary structure, monomer. Interacts with tah18. Interacts with mia40. Requires [2Fe-2S] cluster as cofactor. It depends on [4Fe-4S] cluster as a cofactor.

It is found in the cytoplasm. Its subcellular location is the mitochondrion intermembrane space. Its function is as follows. Component of the cytosolic iron-sulfur (Fe-S) protein assembly (CIA) machinery required for the maturation of extramitochondrial Fe-S proteins. Part of an electron transfer chain functioning in an early step of cytosolic Fe-S biogenesis, facilitating the de novo assembly of a [4Fe-4S] cluster on the scaffold complex cfd1-nbp35. Electrons are transferred to dre2 from NADPH via the FAD- and FMN-containing protein tah18. Tah18-dre2 are also required for the assembly of the diferric tyrosyl radical cofactor of ribonucleotide reductase (RNR), probably by providing electrons for reduction during radical cofactor maturation in the catalytic small subunit rnr2. The chain is Fe-S cluster assembly protein dre2 from Aspergillus clavatus (strain ATCC 1007 / CBS 513.65 / DSM 816 / NCTC 3887 / NRRL 1 / QM 1276 / 107).